The chain runs to 506 residues: Tyrosine-protein kinase FRK (506 aa).

The SH3 domain maps to 43–111 (SQGQYFVALF…PSNYVAEDRS (69 aa)). The SH2 domain maps to 117 to 209 (WFFGAIKRAD…GLCVKLEKPC (93 aa)). Threonine 179 is subject to Phosphothreonine. Positions 235–492 (IQLLKRLGSG…TLHWKLEDYF (258 aa)) constitute a Protein kinase domain. ATP-binding positions include 241–249 (LGSGQFGEV) and lysine 263. Residue aspartate 355 is the Proton acceptor of the active site. The residue at position 388 (tyrosine 388) is a Phosphotyrosine; by autocatalysis.

The protein belongs to the protein kinase superfamily. Tyr protein kinase family. SRC subfamily. In terms of assembly, interacts (via the SH3-domain) with PTEN. Interacts with RB1. In terms of tissue distribution, highly expressed in stomach, small intestine and colon. Concentrated in the brush border membranes of epithelial cells, throughout the maturation axis of the adult small intestine.

The protein resides in the cytoplasm. It localises to the nucleus. It catalyses the reaction L-tyrosyl-[protein] + ATP = O-phospho-L-tyrosyl-[protein] + ADP + H(+). Non-receptor tyrosine-protein kinase that negatively regulates cell proliferation. Positively regulates PTEN protein stability through phosphorylation of PTEN on 'Tyr-336', which in turn prevents its ubiquitination and degradation, possibly by reducing its binding to NEDD4. May function as a tumor suppressor. In Rattus norvegicus (Rat), this protein is Tyrosine-protein kinase FRK (Frk).